The sequence spans 400 residues: N(alpha)-acyl-glutamine aminoacylase (400 aa).

It belongs to the peptidase M20 family. Zn(2+) serves as cofactor.

It catalyses the reaction an N(2)-acyl-L-glutamine + H2O = a carboxylate + L-glutamine. The catalysed reaction is N(2)-[(2E)-3-methylhex-2-enoyl]-L-glutaminate + H2O = (2E)-3-methylhex-2-enoate + L-glutamine. The enzyme catalyses N(2)-(3-hydroxy-3-methylhexanoyl)-L-glutaminate + H2O = 3-hydroxy-3-methylhexanoate + L-glutamine. Partial loss of activity with the combination Mn(2+) and chelating agents. Activity is lost in presence of 0.5 mM dithiothreitol. In terms of biological role, hydrolyzes odorless N-alpha-acyl-L-glutamine conjugates of short- and medium-chain fatty acids, releasing human axillary malodor compounds. The enzyme is highly specific for the glutamine residue but has a low specificity for the acyl part of the substrate. The two most common products are 3-methyl-2-hexenoic acid (3M2H) and 3-hydroxy-3-methyl-hexanoic acid (HMHA), which are produced from the odorless precursors N-alpha-3-methyl-2-hexenoyl-L-glutamine (3M2H-Gln) and N-alpha-3-hydroxy-3-methylhexanoyl-L-glutamine (HMHA-Gln). In addition, over 28 different carboxylic acids contributing to human body odor are released by this enzyme from odorless axilla secretions, including several aliphatic 3-hydroxy acids with 4-Me branches, 3,4-unsaturated, 4-Et-branched aliphatic acids, and a variety of degradation products of amino acids. In Corynebacterium striatum, this protein is N(alpha)-acyl-glutamine aminoacylase.